The sequence spans 770 residues: Conserved oligomeric Golgi complex subunit 7 (770 aa).

Belongs to the COG7 family. In terms of assembly, component of the conserved oligomeric Golgi complex which is composed of eight different subunits and is required for normal Golgi morphology and localization.

The protein localises to the golgi apparatus membrane. Functionally, required for normal Golgi function. The polypeptide is Conserved oligomeric Golgi complex subunit 7 (COG7) (Homo sapiens (Human)).